The following is a 185-amino-acid chain: Ribosome-recycling factor (185 aa).

Belongs to the RRF family.

The protein localises to the cytoplasm. Its function is as follows. Responsible for the release of ribosomes from messenger RNA at the termination of protein biosynthesis. May increase the efficiency of translation by recycling ribosomes from one round of translation to another. This is Ribosome-recycling factor from Campylobacter jejuni subsp. doylei (strain ATCC BAA-1458 / RM4099 / 269.97).